A 240-amino-acid chain; its full sequence is UDP-2,3-diacylglucosamine hydrolase (240 aa).

Positions 8, 10, 41, 79, and 114 each coordinate Mn(2+). 79–80 lines the substrate pocket; it reads NR. Substrate is bound by residues D122, S160, N164, K167, and H195. 2 residues coordinate Mn(2+): H195 and H197.

This sequence belongs to the LpxH family. The cofactor is Mn(2+).

The protein localises to the cell inner membrane. The catalysed reaction is UDP-2-N,3-O-bis[(3R)-3-hydroxytetradecanoyl]-alpha-D-glucosamine + H2O = 2-N,3-O-bis[(3R)-3-hydroxytetradecanoyl]-alpha-D-glucosaminyl 1-phosphate + UMP + 2 H(+). The protein operates within glycolipid biosynthesis; lipid IV(A) biosynthesis; lipid IV(A) from (3R)-3-hydroxytetradecanoyl-[acyl-carrier-protein] and UDP-N-acetyl-alpha-D-glucosamine: step 4/6. Functionally, hydrolyzes the pyrophosphate bond of UDP-2,3-diacylglucosamine to yield 2,3-diacylglucosamine 1-phosphate (lipid X) and UMP by catalyzing the attack of water at the alpha-P atom. Involved in the biosynthesis of lipid A, a phosphorylated glycolipid that anchors the lipopolysaccharide to the outer membrane of the cell. The protein is UDP-2,3-diacylglucosamine hydrolase of Escherichia coli (strain SE11).